The following is a 748-amino-acid chain: Rho GTPase-activating protein 24 (748 aa).

The segment at 1–20 (MEENNDSTENPQQGQGRQNA) is disordered. The segment covering 7 to 18 (STENPQQGQGRQ) has biased composition (polar residues). In terms of domain architecture, PH spans 19–125 (NAIKCGWLRK…WVKSIRRVIW (107 aa)). The Rho-GAP domain maps to 135–329 (QKLEDTVRYE…VMISKHDCLF (195 aa)). Disordered stretches follow at residues 354-476 (TMGQ…GTHS) and 582-641 (DFFG…SSNH). Polar residues-rich tracts occupy residues 356 to 374 (GQLQNKENNNTKDSPSRQC) and 382 to 405 (PQRSSMNNGSPTALSGSKTNSPKN). Phosphoserine is present on residues Ser-369, Ser-391, Ser-396, Ser-398, Ser-402, Ser-413, Ser-415, and Ser-437. Residues 432–476 (IVTNGSFSSSNAEGLEKTQTTPNGSLQARRSSSLKVSGTKMGTHS) are compositionally biased toward polar residues. A Phosphothreonine modification is found at Thr-452. Residues 600 to 615 (DLSHPRDYESKSDHRS) show a composition bias toward basic and acidic residues. The span at 617–641 (GGRSSRATSSSDNSETFVGNSSSNH) shows a compositional bias: low complexity. The stretch at 649-729 (SSLKQEMTKQ…KEMEQFFSTF (81 aa)) forms a coiled coil.

Interacts with FLNA. Phosphorylated by ROCK, leading to activate the RacGAP activity. Isoform 1 is widely expressed with a higher level in kidney. Isoform 2 is mainly expressed in endothelial cells.

The protein localises to the cytoplasm. Its subcellular location is the cytoskeleton. The protein resides in the cell junction. It is found in the adherens junction. It localises to the focal adhesion. The protein localises to the cell projection. In terms of biological role, rho GTPase-activating protein involved in cell polarity, cell morphology and cytoskeletal organization. Acts as a GTPase activator for the Rac-type GTPase by converting it to an inactive GDP-bound state. Controls actin remodeling by inactivating Rac downstream of Rho leading to suppress leading edge protrusion and promotes cell retraction to achieve cellular polarity. Able to suppress RAC1 and CDC42 activity in vitro. Overexpression induces cell rounding with partial or complete disruption of actin stress fibers and formation of membrane ruffles, lamellipodia, and filopodia. Isoform 2 is a vascular cell-specific GAP involved in modulation of angiogenesis. This is Rho GTPase-activating protein 24 (ARHGAP24) from Homo sapiens (Human).